A 545-amino-acid polypeptide reads, in one-letter code: CTP synthase (545 aa).

The segment at 1 to 266 (MTTRYIFVTG…DDLVVKRFGL (266 aa)) is amidoligase domain. Serine 14 lines the CTP pocket. Serine 14 serves as a coordination point for UTP. Residues 15-20 (SLGKGI) and aspartate 72 contribute to the ATP site. Positions 72 and 140 each coordinate Mg(2+). CTP is bound by residues 147–149 (DIE), 187–192 (KTKPTQ), and lysine 223. UTP is bound by residues 187–192 (KTKPTQ) and lysine 223. 239–241 (KDV) serves as a coordination point for ATP. One can recognise a Glutamine amidotransferase type-1 domain in the interval 291-542 (VIGMVGKYIE…IAAASAHQKR (252 aa)). Glycine 352 contributes to the L-glutamine binding site. Cysteine 379 acts as the Nucleophile; for glutamine hydrolysis in catalysis. Residues 380-383 (LGMQ), glutamate 403, and arginine 470 contribute to the L-glutamine site. Catalysis depends on residues histidine 515 and glutamate 517.

The protein belongs to the CTP synthase family. As to quaternary structure, homotetramer.

It catalyses the reaction UTP + L-glutamine + ATP + H2O = CTP + L-glutamate + ADP + phosphate + 2 H(+). The enzyme catalyses L-glutamine + H2O = L-glutamate + NH4(+). The catalysed reaction is UTP + NH4(+) + ATP = CTP + ADP + phosphate + 2 H(+). Its pathway is pyrimidine metabolism; CTP biosynthesis via de novo pathway; CTP from UDP: step 2/2. Its activity is regulated as follows. Allosterically activated by GTP, when glutamine is the substrate; GTP has no effect on the reaction when ammonia is the substrate. The allosteric effector GTP functions by stabilizing the protein conformation that binds the tetrahedral intermediate(s) formed during glutamine hydrolysis. Inhibited by the product CTP, via allosteric rather than competitive inhibition. Catalyzes the ATP-dependent amination of UTP to CTP with either L-glutamine or ammonia as the source of nitrogen. Regulates intracellular CTP levels through interactions with the four ribonucleotide triphosphates. This chain is CTP synthase, found in Shewanella baltica (strain OS223).